A 952-amino-acid polypeptide reads, in one-letter code: GATA zinc finger domain-containing protein 5 (952 aa).

2 disordered regions span residues 1-36 (MDYQ…DSPS) and 138-197 (PTPL…SPKQ). Polar residues predominate over residues 10–24 (QISQEFPTDISTTKS). Pro residues predominate over residues 148–157 (SPPPPPPPPA). Residues 158–196 (ATTTTTITTTTTTSAGNSTTKNNNNNNNNNNNNNGKSPK) show a composition bias toward low complexity. A GATA-type zinc finger spans residues 241-266 (CYQCNTSNTPEWRKGPEGPATLCNAC). Disordered stretches follow at residues 380–418 (MTPS…HEQP), 433–478 (LLSS…GGGG), 634–699 (QNNS…NKNN), and 732–816 (QQQE…LSVN). Positions 393 to 412 (KTTKTKPKPKSKSKPGKITH) are enriched in basic residues. The segment covering 445–467 (SSSSSCGTSLNSSLGSSSGTITN) has biased composition (low complexity). Gly residues predominate over residues 468–478 (SGGGSSGGGGG). The span at 634 to 653 (QNNSFSGPNDQNPYVPSVSL) shows a compositional bias: polar residues. Composition is skewed to low complexity over residues 654 to 668 (NSNK…NNNK), 678 to 699 (NNKN…NKNN), and 732 to 745 (QQQE…EQQQ). Polar residues predominate over residues 746–762 (NLSINNSNQTNENEILG). Residues 763–814 (TTTTTTTSTATIITSQVPMNLSPNSDDNQSSSNYSTLSDSGSSPTDSFSGLS) show a composition bias toward low complexity.

The polypeptide is GATA zinc finger domain-containing protein 5 (gtaE) (Dictyostelium discoideum (Social amoeba)).